Consider the following 320-residue polypeptide: Porphobilinogen deaminase (320 aa).

Cys-251 is subject to S-(dipyrrolylmethanemethyl)cysteine.

The protein belongs to the HMBS family. As to quaternary structure, monomer. It depends on dipyrromethane as a cofactor.

The catalysed reaction is 4 porphobilinogen + H2O = hydroxymethylbilane + 4 NH4(+). It functions in the pathway porphyrin-containing compound metabolism; protoporphyrin-IX biosynthesis; coproporphyrinogen-III from 5-aminolevulinate: step 2/4. In terms of biological role, tetrapolymerization of the monopyrrole PBG into the hydroxymethylbilane pre-uroporphyrinogen in several discrete steps. In Phenylobacterium zucineum (strain HLK1), this protein is Porphobilinogen deaminase.